A 153-amino-acid polypeptide reads, in one-letter code: Fimbrial protein EcpC (153 aa).

Residues 1-8 constitute a propeptide, leader sequence; that stretch reads MLKQVQKG. An N-methylphenylalanine modification is found at Phe9. A helical transmembrane segment spans residues 9-29; that stretch reads FTLIELMIVIAIIGILAAIAL. A disulfide bridge connects residues Cys130 and Cys143.

This sequence belongs to the N-Me-Phe pilin family.

It localises to the fimbrium. The protein localises to the membrane. The protein is Fimbrial protein EcpC (ecpC) of Eikenella corrodens.